The sequence spans 489 residues: Ribonuclease G (489 aa).

Positions 39–128 constitute an S1 motif domain; the sequence is GNIYKGRVSR…LTTDITLPSR (90 aa). Residues D304 and D347 each coordinate Mg(2+).

The protein belongs to the RNase E/G family. RNase G subfamily. As to quaternary structure, homodimer, and possible higher multimers. Requires Mg(2+) as cofactor.

Its subcellular location is the cytoplasm. Its function is as follows. Acts in the processing of the 5'-end of precursors of 16S rRNA. Confers adaptive resistance to aminoglycoside antibiotics through modulation of 16S rRNA processing. An endoribonuclease, it prefers 5'-monophosphorylated substrates and cleaves single-stranded sites rich in A and U residues; also contributes to 23S rRNA processing, tRNA processing and mRNA turnover. Involved in decay of speF mRNA, has a preference for adenine nucleotides. The sequence is that of Ribonuclease G from Salmonella typhimurium (strain SL1344).